The primary structure comprises 85 residues: Small ribosomal subunit protein uS17 (85 aa).

Belongs to the universal ribosomal protein uS17 family. As to quaternary structure, part of the 30S ribosomal subunit.

Functionally, one of the primary rRNA binding proteins, it binds specifically to the 5'-end of 16S ribosomal RNA. This Pasteurella multocida (strain Pm70) protein is Small ribosomal subunit protein uS17.